We begin with the raw amino-acid sequence, 469 residues long: Glutamine synthetase (469 aa).

Residues 12-97 (HDVKWVDLRF…LVCDIIEPST (86 aa)) form the GS beta-grasp domain. The GS catalytic domain maps to 105–469 (PRNIAKRAEE…PLEYDLYYSV (365 aa)). Residues Glu130 and Glu132 each contribute to the Mg(2+) site. Glu208 lines the ATP pocket. Mg(2+)-binding residues include Glu213 and Glu221. L-glutamate-binding positions include 265–266 (NG) and Gly266. His270 serves as a coordination point for Mg(2+). ATP-binding positions include 272-274 (HMS) and Ser274. Arg322, Glu328, and Arg340 together coordinate L-glutamate. 3 residues coordinate ATP: Arg340, Arg345, and Lys353. Position 358 (Glu358) interacts with Mg(2+). Residue Arg360 participates in L-glutamate binding. Tyr398 is subject to O-AMP-tyrosine.

Belongs to the glutamine synthetase family. As to quaternary structure, oligomer of 12 subunits arranged in the form of two hexameric ring. Requires Mg(2+) as cofactor.

It is found in the cytoplasm. The catalysed reaction is L-glutamate + NH4(+) + ATP = L-glutamine + ADP + phosphate + H(+). The activity of this enzyme could be controlled by adenylation under conditions of abundant glutamine. Functionally, catalyzes the ATP-dependent biosynthesis of glutamine from glutamate and ammonia. The chain is Glutamine synthetase from Pseudomonas aeruginosa (strain ATCC 15692 / DSM 22644 / CIP 104116 / JCM 14847 / LMG 12228 / 1C / PRS 101 / PAO1).